The sequence spans 436 residues: Origin recognition complex subunit 4 (436 aa).

At K7 the chain carries N6-methyllysine. Position 67–74 (67–74) interacts with ATP; that stretch reads GPRGSGKT.

This sequence belongs to the ORC4 family. Component of ORC, a complex composed of at least 6 subunits: ORC1, ORC2, ORC3, ORC4, ORC5 and ORC6. ORC is regulated in a cell-cycle dependent manner. It is sequentially assembled at the exit from anaphase of mitosis and disassembled as cells enter S phase. Interacts with DBF4. Interacts with POLQ.

The protein resides in the nucleus. In terms of biological role, component of the origin recognition complex (ORC) that binds origins of replication. DNA-binding is ATP-dependent. The specific DNA sequences that define origins of replication have not been identified yet. ORC is required to assemble the pre-replication complex necessary to initiate DNA replication. Binds histone H3 and H4 trimethylation marks H3K9me3, H3K27me3 and H4K20me3. The polypeptide is Origin recognition complex subunit 4 (ORC4) (Pongo abelii (Sumatran orangutan)).